A 192-amino-acid polypeptide reads, in one-letter code: Cytochrome b-245 light chain (192 aa).

The Cytoplasmic portion of the chain corresponds to Gly2–Ala7. The helical transmembrane segment at Met8–Ala30 threads the bilayer. Residues Gly31–Gln35 are Extracellular-facing. Residues Trp36–Glu53 form a helical membrane-spanning segment. The Cytoplasmic portion of the chain corresponds to Tyr54–Gly69. An intramembrane segment occupies Gln70–Phe80. The Cytoplasmic portion of the chain corresponds to Gly81–Asn86. The helical transmembrane segment at Tyr87–Leu104 threads the bilayer. Leu105 is a topological domain (extracellular). The helical transmembrane segment at Ala106–Ile126 threads the bilayer. Over Arg127 to Val192 the chain is Cytoplasmic. The tract at residues Ile134–Val192 is disordered. Position 147 is a phosphothreonine (Thr147). Lys149 is covalently cross-linked (Glycyl lysine isopeptide (Lys-Gly) (interchain with G-Cter in ubiquitin)). Phosphoserine is present on residues Ser168 and Ser176.

This sequence belongs to the p22phox family. Component of the phagocyte NADPH oxidase core complex/cytochrome b558 complex, composed of CYBB (heavy chain (beta)) and CYBA (light chain (alpha)). Component of the phagocyte NADPH oxidase complex composed of an obligatory core heterodimer formed by the membrane proteins CYBA and CYBB and the cytosolic regulatory subunits NCF1/p47-phox, NCF2/p67-phox, NCF4/p40-phox and the small GTPase RAC1 or RAC2. Interacts with NCF1 (via SH3 domain). Interacts with SH3PXD2A. Interacts with DUOX1, DUOX2 and TPO. Interacts with NOX4; this interaction mediates superoxide generation. Interacts with calprotectin (S100A8/9). Interacts with GBP7. Interacts with NOXO1. Forms a heterodimer with NOX3 and is essential for activity and cell membrane localization of NOX3. Interacts with NOX1. Ubiquitinated at Lys-149 likely by RNF145. Post-translationally, phosphorylation at Thr-147 enhances NADPH oxidase activity by promoting NCF1/p47-phox binding. In terms of tissue distribution, the strongest level of expression is found in kidney, peritoneal neutrophils and peritoneal macrophages, and a lower level in spleen and small intestine. Very low level of expression can be noted in brain, liver, testis, and heart.

It is found in the cell membrane. Functionally, subunit of NADPH oxidase complexes that is required for the NADPH oxidase activity that generates, in various cell types, superoxide from molecular oxygen utilizing NADPH as an electron donor. Subunit of the phagocyte NADPH oxidase complex that mediates the transfer of electrons from cytosolic NADPH to O2 to produce the superoxide anion (O2(-)). In the activated complex, electrons are first transferred from NADPH to flavin adenine dinucleotide (FAD) and subsequently transferred via two heme molecules to molecular oxygen, producing superoxide through an outer-sphere reaction. Activation of the NADPH oxidase complex is initiated by the assembly of cytosolic subunits of the NADPH oxidase complex with the core NADPH oxidase complex to form a complex at the plasma membrane or phagosomal membrane. This activation process is initiated by phosphorylation dependent binding of the cytosolic NCF1/p47-phox subunit to the C-terminus of CYBA/p22-phox. Aassociates with NOX3 to form a functional NADPH oxidase constitutively generating superoxide. This Mus musculus (Mouse) protein is Cytochrome b-245 light chain.